A 301-amino-acid polypeptide reads, in one-letter code: Cilia- and flagella-associated protein 161 (301 aa).

Its subcellular location is the cytoplasm. It localises to the cytoskeleton. It is found in the cilium axoneme. Microtubule inner protein (MIP) part of the dynein-decorated doublet microtubules (DMTs) in cilia axoneme, which is required for motile cilia beating. This Danio rerio (Zebrafish) protein is Cilia- and flagella-associated protein 161.